A 254-amino-acid chain; its full sequence is Imidazole glycerol phosphate synthase subunit HisF (254 aa).

Residues Asp12 and Asp131 contribute to the active site.

Belongs to the HisA/HisF family. In terms of assembly, heterodimer of HisH and HisF.

It localises to the cytoplasm. The catalysed reaction is 5-[(5-phospho-1-deoxy-D-ribulos-1-ylimino)methylamino]-1-(5-phospho-beta-D-ribosyl)imidazole-4-carboxamide + L-glutamine = D-erythro-1-(imidazol-4-yl)glycerol 3-phosphate + 5-amino-1-(5-phospho-beta-D-ribosyl)imidazole-4-carboxamide + L-glutamate + H(+). The protein operates within amino-acid biosynthesis; L-histidine biosynthesis; L-histidine from 5-phospho-alpha-D-ribose 1-diphosphate: step 5/9. IGPS catalyzes the conversion of PRFAR and glutamine to IGP, AICAR and glutamate. The HisF subunit catalyzes the cyclization activity that produces IGP and AICAR from PRFAR using the ammonia provided by the HisH subunit. This Corynebacterium aurimucosum (strain ATCC 700975 / DSM 44827 / CIP 107346 / CN-1) (Corynebacterium nigricans) protein is Imidazole glycerol phosphate synthase subunit HisF.